Reading from the N-terminus, the 243-residue chain is E3 ubiquitin-protein ligase RMA3 (243 aa).

The segment at 44 to 92 (CNICLDTAHDPVVTLCGHLFCWPCIYKWLHVQLSSVSVDQHQNNCPVCK) adopts an RING-type zinc-finger fold. Positions 110 to 135 (SPSSTFGSKKQDALSTDIPRRPAPSA) are disordered. A helical; Anchor for type IV membrane protein transmembrane segment spans residues 223-243 (KSLNRVSIFFLCCIILCLLLF).

In terms of tissue distribution, ubiquitous. Highly expressed in roots.

Its subcellular location is the endoplasmic reticulum membrane. The catalysed reaction is S-ubiquitinyl-[E2 ubiquitin-conjugating enzyme]-L-cysteine + [acceptor protein]-L-lysine = [E2 ubiquitin-conjugating enzyme]-L-cysteine + N(6)-ubiquitinyl-[acceptor protein]-L-lysine.. The protein operates within protein modification; protein ubiquitination. Its function is as follows. E3 ubiquitin-protein ligase. In Arabidopsis thaliana (Mouse-ear cress), this protein is E3 ubiquitin-protein ligase RMA3 (RMA3).